We begin with the raw amino-acid sequence, 308 residues long: D-alanine--D-alanine ligase (308 aa).

The 201-residue stretch at 102–302 (KHVAKAAGIP…FGEFLRWMVE (201 aa)) folds into the ATP-grasp domain. 128–183 (PMKPPYVVKPVREGSSFGVVIVKEDQSHPPQVITSSDWRYGDRIMVERYVAGREFT) provides a ligand contact to ATP. Mg(2+) is bound by residues aspartate 252, glutamate 269, and asparagine 271.

Belongs to the D-alanine--D-alanine ligase family. The cofactor is Mg(2+). Requires Mn(2+) as cofactor.

It is found in the cytoplasm. It carries out the reaction 2 D-alanine + ATP = D-alanyl-D-alanine + ADP + phosphate + H(+). It functions in the pathway cell wall biogenesis; peptidoglycan biosynthesis. Its function is as follows. Cell wall formation. The chain is D-alanine--D-alanine ligase from Sinorhizobium medicae (strain WSM419) (Ensifer medicae).